Reading from the N-terminus, the 284-residue chain is Tropomyosin (284 aa).

The tract at residues Met1–Gln47 is disordered. A coiled-coil region spans residues Met1–Tyr284. Basic and acidic residues predominate over residues Lys12–Lys38.

It belongs to the tropomyosin family.

In terms of biological role, tropomyosin, in association with the troponin complex, plays a central role in the calcium dependent regulation of muscle contraction. The chain is Tropomyosin from Trichinella spiralis (Trichina worm).